The following is a 795-amino-acid chain: ATP-dependent RNA helicase DHX15 (795 aa).

Residues 1 to 111 are disordered; sequence MSKRHRLDLG…HTGHTGHTSL (111 aa). Residue S15 is modified to Phosphoserine. Residues 20–62 are compositionally biased toward basic and acidic residues; the sequence is AGTDGKDRERDRDREDRSKDRDRERDRGDREREREKEKEKELR. Low complexity predominate over residues 79–110; that stretch reads ASHSAHSTHSAHSTHSTHSAHSTHTGHTGHTS. The 167-residue stretch at 147-313 folds into the Helicase ATP-binding domain; sequence TDILVRHQSF…FDNCPLLTIP (167 aa). 160–167 serves as a coordination point for ATP; that stretch reads GETGSGKT. The DEAH box signature appears at 260-263; the sequence is DEAH. The Helicase C-terminal domain occupies 338–518; that stretch reads TVIQIHMCEE…SVVLQLKKLG (181 aa). Residue K488 is modified to N6-acetyllysine. K786 is covalently cross-linked (Glycyl lysine isopeptide (Lys-Gly) (interchain with G-Cter in SUMO2)).

It belongs to the DEAD box helicase family. DEAH subfamily. DDX15/PRP43 sub-subfamily. As to quaternary structure, component of the U11/U12 snRNPs that are part of the U12-type spliceosome. Identified in the Intron Large spliceosome complex (IL, also named intron lariat spliceosome), a post-mRNA release spliceosomal complex containing the excised intron, U2, U5 and U6 snRNPs, and splicing factors; the association may be transient. The IL complex exists in two distinct conformations, one with the DHX15 (ILS2) and one without (ILS1). Interacts with TFIP11 (via G-patch domain); indicative for a recruitment to the IL complex. Interacts with SSB/La. Interacts with GPATCH2 (via G-patch domain); promoting the RNA helicase activity. Interacts with NKRF (via G-patch domain); promoting the RNA helicase activity. Interacts with NLRP6. In terms of tissue distribution, ubiquitous.

It is found in the nucleus. Its subcellular location is the nucleolus. It catalyses the reaction ATP + H2O = ADP + phosphate + H(+). With respect to regulation, ATPase activity is enhanced upon binding to G-patch domain-containing proteins. G-patch domain-containing proteins act like a brace that tethers mobile sections of DHX15 together, stabilizing a functional conformation with high RNA affinity, thereby promoting the ATPase activity. Its function is as follows. RNA helicase involved in mRNA processing and antiviral innate immunity. Pre-mRNA processing factor involved in disassembly of spliceosomes after the release of mature mRNA. In cooperation with TFIP11 seem to be involved in the transition of the U2, U5 and U6 snRNP-containing IL complex to the snRNP-free IS complex leading to efficient debranching and turnover of excised introns. Plays a key role in antiviral innate immunity by promoting both MAVS-dependent signaling and NLRP6 inflammasome. Acts as an RNA virus sensor: recognizes and binds viral double stranded RNA (dsRNA) and activates the MAVS-dependent signaling to produce interferon-beta and interferon lambda-3 (IFNL3). Involved in intestinal antiviral innate immunity together with NLRP6: recognizes and binds viral dsRNA and promotes activation of the NLRP6 inflammasome in intestinal epithelial cells to restrict infection by enteric viruses. The NLRP6 inflammasome acts by promoting maturation and secretion of IL18 in the extracellular milieu. Also involved in antibacterial innate immunity by promoting Wnt-induced antimicrobial protein expression in Paneth cells. The polypeptide is ATP-dependent RNA helicase DHX15 (Mus musculus (Mouse)).